A 532-amino-acid polypeptide reads, in one-letter code: Invertase 1 (532 aa).

The signal sequence occupies residues 1–19; that stretch reads MLLQAFLFLLAGFAAKISA. Asn-23 is a glycosylation site (N-linked (GlcNAc...) asparagine). Residues 39 to 42 and Gln-60 contribute to the substrate site; that span reads WMND. Asp-42 is a catalytic residue. N-linked (GlcNAc...) asparagine glycosylation is present at Asn-64. 102–103 contacts substrate; that stretch reads YS. Asn-111, Asn-112, Asn-118, and Asn-165 each carry an N-linked (GlcNAc...) asparagine glycan. Substrate contacts are provided by residues 170–171 and Glu-223; that span reads RD. Asn-275 carries an N-linked (GlcNAc...) asparagine glycan. A substrate-binding site is contributed by Trp-311. 5 N-linked (GlcNAc...) asparagine glycosylation sites follow: Asn-356, Asn-369, Asn-384, Asn-398, and Asn-512.

Belongs to the glycosyl hydrolase 32 family. Post-translationally, isoform Secreted is glycosylated. Isoform Intracellular is not glycosylated.

It is found in the cytoplasm. The protein localises to the secreted. The enzyme catalyses Hydrolysis of terminal non-reducing beta-D-fructofuranoside residues in beta-D-fructofuranosides.. This is Invertase 1 (SUC1) from Saccharomyces cerevisiae (Baker's yeast).